We begin with the raw amino-acid sequence, 118 residues long: NADH-ubiquinone oxidoreductase chain 3 (118 aa).

A run of 2 helical transmembrane segments spans residues 4–24 (FAPI…PLGV) and 87–107 (IDPF…IGSL).

It belongs to the complex I subunit 3 family.

It is found in the mitochondrion membrane. The enzyme catalyses a ubiquinone + NADH + 5 H(+)(in) = a ubiquinol + NAD(+) + 4 H(+)(out). In terms of biological role, core subunit of the mitochondrial membrane respiratory chain NADH dehydrogenase (Complex I) that is believed to belong to the minimal assembly required for catalysis. Complex I functions in the transfer of electrons from NADH to the respiratory chain. The immediate electron acceptor for the enzyme is believed to be ubiquinone. The polypeptide is NADH-ubiquinone oxidoreductase chain 3 (ND3) (Panax ginseng (Korean ginseng)).